Reading from the N-terminus, the 504-residue chain is Maturase K (504 aa).

Belongs to the intron maturase 2 family. MatK subfamily.

The protein resides in the plastid. Its subcellular location is the chloroplast. In terms of biological role, usually encoded in the trnK tRNA gene intron. Probably assists in splicing its own and other chloroplast group II introns. This is Maturase K from Nepenthes alata (Winged pitcher plant).